A 108-amino-acid polypeptide reads, in one-letter code: Small ribosomal subunit protein bS16 (108 aa).

This sequence belongs to the bacterial ribosomal protein bS16 family.

In Orientia tsutsugamushi (strain Boryong) (Rickettsia tsutsugamushi), this protein is Small ribosomal subunit protein bS16.